The following is a 228-amino-acid chain: Protein Thf1 (228 aa).

Residues 201–223 (IKRSKEVVDELSQTERRKREERA) are a coiled coil. The tract at residues 209 to 228 (DELSQTERRKREERAVSQPG) is disordered.

Belongs to the THF1 family.

In terms of biological role, may be involved in photosynthetic membrane biogenesis. The polypeptide is Protein Thf1 (Gloeobacter violaceus (strain ATCC 29082 / PCC 7421)).